Reading from the N-terminus, the 484-residue chain is Probable chitinase 2 (484 aa).

The N-terminal stretch at 1-33 (MTLRSRLSGEAPQLWLLLLLASTASSLWASVAA) is a signal peptide. Positions 41 to 432 (KVVVCYVSTW…RTINEATMLA (392 aa)) constitute a GH18 domain. The cysteines at positions 45 and 70 are disulfide-linked. Residues 98 to 99 (EE) and 125 to 128 (GGWN) contribute to the chitin site. Glu168 functions as the Proton donor in the catalytic mechanism. Chitin contacts are provided by residues Tyr169, 231–234 (MCYD), and Trp384. Ser467 is modified (phosphoserine).

Belongs to the glycosyl hydrolase 18 family. Chitinase class II subfamily.

It carries out the reaction Random endo-hydrolysis of N-acetyl-beta-D-glucosaminide (1-&gt;4)-beta-linkages in chitin and chitodextrins.. This Drosophila melanogaster (Fruit fly) protein is Probable chitinase 2.